Reading from the N-terminus, the 459-residue chain is Peptidyl-prolyl cis-trans isomerase FKBP4 (459 aa).

Methionine 1 is modified (N-acetylmethionine; in peptidyl-prolyl cis-trans isomerase FKBP4; alternate). Residues 1-24 form a disordered region; that stretch reads MTAEEMKATESGAQSAPLPMEGVD. N-acetylthreonine; in peptidyl-prolyl cis-trans isomerase FKBP4, N-terminally processed; partial is present on threonine 2. The 89-residue stretch at 50–138 folds into the PPIase FKBP-type 1 domain; that stretch reads GDRVFVHYTG…VFEVELFEFK (89 aa). Threonine 143 is modified (phosphothreonine; by CK2). Residues 167–253 form the PPIase FKBP-type 2 domain; sequence GAIVEVALEG…KYELHLKSFE (87 aa). Phosphotyrosine is present on tyrosine 220. The interaction with tubulin stretch occupies residues 267–400; that stretch reads LEQSTIVKER…TQLAVCQQRI (134 aa). TPR repeat units lie at residues 270 to 303, 319 to 352, and 353 to 386; these read STIVKERGTVYFKEGKYKQALLQYKKIVSWLEYE, LASHLNLAMCHLKLQAFSAAIESCNKALELDSNN, and EKGLFRRGEAHLAVNDFELARADFQKVLQLYPNN. Position 282 is an N6-acetyllysine (lysine 282). Position 373 is an omega-N-methylarginine (arginine 373). Residues 421–459 form a disordered region; it reads EENKAKAEASSGDHPTDTEMKEEQKSNTAGSQSQVETEA. Over residues 434–445 the composition is skewed to basic and acidic residues; sequence HPTDTEMKEEQK. The residue at position 436 (threonine 436) is a Phosphothreonine. Lysine 441 is covalently cross-linked (Glycyl lysine isopeptide (Lys-Gly) (interchain with G-Cter in SUMO1)). Over residues 446-459 the composition is skewed to polar residues; it reads SNTAGSQSQVETEA. Phosphoserine is present on residues serine 451 and serine 453.

Homodimer. Interacts with GLMN. Associates with HSP90AA1 and HSP70 in steroid hormone receptor complexes. Also interacts with peroxisomal phytanoyl-CoA alpha-hydroxylase (PHYH). Interacts with NR3C1 and dynein. Interacts with HSF1 in the HSP90 complex. Associates with tubulin. Interacts with MAPT/TAU. Interacts (via TPR domain) with S100A1, S100A2 and S100A6; the interaction is Ca(2+) dependent. Interaction with S100A1 and S100A2 (but not with S100A6) leads to inhibition of FKBP4-HSP90 interaction. Interacts with dynein; causes partially NR3C1 transport to the nucleus. Phosphorylation by CK2 results in loss of HSP90 binding activity. In terms of tissue distribution, widely expressed.

It localises to the cytoplasm. It is found in the cytosol. The protein resides in the mitochondrion. The protein localises to the nucleus. Its subcellular location is the cytoskeleton. It localises to the cell projection. It is found in the axon. The catalysed reaction is [protein]-peptidylproline (omega=180) = [protein]-peptidylproline (omega=0). With respect to regulation, inhibited by FK506. Its function is as follows. Immunophilin protein with PPIase and co-chaperone activities. Component of steroid receptors heterocomplexes through interaction with heat-shock protein 90 (HSP90). May play a role in the intracellular trafficking of heterooligomeric forms of steroid hormone receptors between cytoplasm and nuclear compartments. The isomerase activity controls neuronal growth cones via regulation of TRPC1 channel opening. Also acts as a regulator of microtubule dynamics by inhibiting MAPT/TAU ability to promote microtubule assembly. May have a protective role against oxidative stress in mitochondria. The polypeptide is Peptidyl-prolyl cis-trans isomerase FKBP4 (FKBP4) (Homo sapiens (Human)).